Reading from the N-terminus, the 77-residue chain is Acyl carrier protein (77 aa).

The Carrier domain maps to 3–77; sequence QEIFEKVKKI…GKAVEHIESK (75 aa). An O-(pantetheine 4'-phosphoryl)serine modification is found at Ser-38.

Belongs to the acyl carrier protein (ACP) family. Post-translationally, 4'-phosphopantetheine is transferred from CoA to a specific serine of apo-ACP by AcpS. This modification is essential for activity because fatty acids are bound in thioester linkage to the sulfhydryl of the prosthetic group.

It is found in the cytoplasm. It functions in the pathway lipid metabolism; fatty acid biosynthesis. Functionally, carrier of the growing fatty acid chain in fatty acid biosynthesis. The sequence is that of Acyl carrier protein from Synechocystis sp. (strain ATCC 27184 / PCC 6803 / Kazusa).